The following is a 375-amino-acid chain: Succinyl-diaminopimelate desuccinylase (375 aa).

H66 provides a ligand contact to Zn(2+). D68 is a catalytic residue. D99 serves as a coordination point for Zn(2+). Catalysis depends on E133, which acts as the Proton acceptor. Positions 134, 162, and 348 each coordinate Zn(2+).

It belongs to the peptidase M20A family. DapE subfamily. Homodimer. The cofactor is Zn(2+). Co(2+) is required as a cofactor.

The enzyme catalyses N-succinyl-(2S,6S)-2,6-diaminopimelate + H2O = (2S,6S)-2,6-diaminopimelate + succinate. The protein operates within amino-acid biosynthesis; L-lysine biosynthesis via DAP pathway; LL-2,6-diaminopimelate from (S)-tetrahydrodipicolinate (succinylase route): step 3/3. Catalyzes the hydrolysis of N-succinyl-L,L-diaminopimelic acid (SDAP), forming succinate and LL-2,6-diaminopimelate (DAP), an intermediate involved in the bacterial biosynthesis of lysine and meso-diaminopimelic acid, an essential component of bacterial cell walls. The sequence is that of Succinyl-diaminopimelate desuccinylase from Cronobacter sakazakii (strain ATCC BAA-894) (Enterobacter sakazakii).